The following is a 197-amino-acid chain: Non-structural protein 5 (197 aa).

Positions 17-30 (IFKNESSSTTSTLS) are enriched in low complexity. The segment at 17-36 (IFKNESSSTTSTLSGKSIGR) is disordered. Residue D92 participates in Mg(2+) binding.

This sequence belongs to the rotavirus NSP5 family. Homodimer. Interacts with VP1. Interacts with VP2. Interacts with NSP2; this interaction leads to up-regulation of NSP5 hyperphosphorylation and formation of virus factories. Interacts with NSP6. Participates in the selective exclusion of host proteins from stress granules (SG) and P bodies (PB). Also participates in the sequestration of these remodeled organelles in viral factories. It depends on Mg(2+) as a cofactor. In terms of processing, O-glycosylated.

It localises to the host cytoplasm. Functionally, plays an essential role in the viral genome replication. Participates, together with NSP2, in the formation of viral factories (viroplasms), which are large inclusions in the host cytoplasm where replication intermediates are assembled and viral RNA replication takes place. Orchestrates the recruitment of viroplasmic proteins such as capsid proteins to these factories. Participates in the selective exclusion of host proteins from stress granules (SG) and P bodies (PB). Also participates in the sequestration of these remodeled organelles in viral factories. The chain is Non-structural protein 5 from Homo sapiens (Human).